The primary structure comprises 647 residues: Beta-galactosidase (647 aa).

The signal sequence occupies residues 1–24 (MLRVPLCTPLPLLALLQLLGAAHG). A propeptide spanning residues 25-29 (IYNVT) is cleaved from the precursor. N-linked (GlcNAc...) asparagine glycosylation occurs at Asn27. Substrate-binding residues include Tyr84, Glu130, and Asn188. Glu189 acts as the Proton donor in catalysis. Cys196 and Cys231 are joined by a disulfide. Asn248 carries N-linked (GlcNAc...) asparagine glycosylation. Catalysis depends on Glu269, which acts as the Nucleophile. A substrate-binding site is contributed by Tyr334. 6 N-linked (GlcNAc...) asparagine glycosylation sites follow: Asn500, Asn504, Asn510, Asn544, Asn557, and Asn617. A disulfide bridge connects residues Cys628 and Cys636.

This sequence belongs to the glycosyl hydrolase 35 family. In terms of assembly, homodimer. May form higher multimers.

Its subcellular location is the lysosome. The catalysed reaction is Hydrolysis of terminal non-reducing beta-D-galactose residues in beta-D-galactosides.. Its function is as follows. Cleaves beta-linked terminal galactosyl residues from gangliosides, glycoproteins, and glycosaminoglycans. The polypeptide is Beta-galactosidase (Glb1) (Mus musculus (Mouse)).